A 338-amino-acid chain; its full sequence is MAEISILGAGGLTGKELLLLFSRQKEHEVVHITSDKLAGKTISEVFPEVSFPKNLVFKKHEDIVPLKSLVVLAVPNEVSVESAPKFLDAGHKVIDLSGVYRLHNQEILEKYYKLKHTRFNYINRAVFGIPEIFRDQLKNADFVSNPGCFSTSVILPIFLLGQLRKNLRPRIIVDSKSGVSGAGGRTEDSGYSYTSVYENFRAYKILSHQHEPEIREYVYSKSGLSDPEVIFTPHLLPVYRGILSTIVLEFDSEPEQDLISILENSSLNEPFIRILKTPEEVELKKVQHTNFLDISLRKRENTLVVVSALDNLVKGAAGQALQNINLMTGAKETLGLLP.

Cysteine 148 is an active-site residue.

This sequence belongs to the NAGSA dehydrogenase family. Type 1 subfamily.

It is found in the cytoplasm. The enzyme catalyses N-acetyl-L-glutamate 5-semialdehyde + phosphate + NADP(+) = N-acetyl-L-glutamyl 5-phosphate + NADPH + H(+). It participates in amino-acid biosynthesis; L-arginine biosynthesis; N(2)-acetyl-L-ornithine from L-glutamate: step 3/4. Catalyzes the NADPH-dependent reduction of N-acetyl-5-glutamyl phosphate to yield N-acetyl-L-glutamate 5-semialdehyde. The chain is N-acetyl-gamma-glutamyl-phosphate reductase from Leptospira interrogans serogroup Icterohaemorrhagiae serovar Lai (strain 56601).